The chain runs to 352 residues: Ion-translocating oxidoreductase complex subunit D (352 aa).

The next 5 helical transmembrane spans lie at 20–40 (IMLL…RFFG), 42–62 (GTLV…ALVL), 78–109 (ALLT…VIIA), 123–143 (PAMI…TSWL), and 148–168 (IAVN…GHTA). Thr187 is modified (FMN phosphoryl threonine). Transmembrane regions (helical) follow at residues 214-234 (ILAG…GVWL), 242-262 (WHIP…GWLF), 267-287 (LAAP…FFIL), and 301-318 (LMFG…RSFG).

The protein belongs to the NqrB/RnfD family. In terms of assembly, the complex is composed of six subunits: RsxA, RsxB, RsxC, RsxD, RsxE and RsxG. Requires FMN as cofactor.

It is found in the cell inner membrane. Its function is as follows. Part of a membrane-bound complex that couples electron transfer with translocation of ions across the membrane. Required to maintain the reduced state of SoxR. The protein is Ion-translocating oxidoreductase complex subunit D of Shigella flexneri.